A 314-amino-acid chain; its full sequence is Probable manganese-dependent inorganic pyrophosphatase (314 aa).

H7, D11, D13, D72, H94, and D146 together coordinate Mn(2+).

This sequence belongs to the PPase class C family. The cofactor is Mn(2+).

The protein resides in the cytoplasm. The enzyme catalyses diphosphate + H2O = 2 phosphate + H(+). This is Probable manganese-dependent inorganic pyrophosphatase (ppaC) from Deinococcus radiodurans (strain ATCC 13939 / DSM 20539 / JCM 16871 / CCUG 27074 / LMG 4051 / NBRC 15346 / NCIMB 9279 / VKM B-1422 / R1).